Here is a 499-residue protein sequence, read N- to C-terminus: MSSTSLYAAIDLGSNSFHMLVVREVAGSIQTLSRIKRKVRLAAGLNSDNTLSAEAMERGWQCLRLFAERLQDIPPTQIRVVATATLRLAVNAEEFLAKAQEILGTPVQVISGEEEARLIYQGVAHTTGGADQRLVVDIGGASTELVTGTGAQTTSLFSLSMGCVTWLERYFADRSLTKENFDLAEAAAREVLLPIADVLRYHGWKVCVGASGTVQALQEIMMAQGMDERITLAKLQQLKQRAIQCGRLEELEIEGLTLERALVFPSGLAILIAIFSELNIQCMTLAGGALREGLVYGMLHLSVEQDIRSRTLRNIQRRFMIDTEQAQRVASLASHLLSQLDGSWELDPLSRDLLLSACSLHEIGLSVDFKRAPQHAAYLVNNLDLPGFTPAQKKLIATLLLNQTNAIDLSSLHQQNAVPPRVAEHLCRLLRLAILFASRRRDDLLPAIQLAAHDDQLTLTLPENWLAEHPLGREMVDQECQWQSYVHWTLRVTSGDTPR.

This sequence belongs to the GppA/Ppx family. GppA subfamily.

The enzyme catalyses guanosine 3'-diphosphate 5'-triphosphate + H2O = guanosine 3',5'-bis(diphosphate) + phosphate + H(+). It functions in the pathway purine metabolism; ppGpp biosynthesis; ppGpp from GTP: step 2/2. Catalyzes the conversion of pppGpp to ppGpp. Guanosine pentaphosphate (pppGpp) is a cytoplasmic signaling molecule which together with ppGpp controls the 'stringent response', an adaptive process that allows bacteria to respond to amino acid starvation, resulting in the coordinated regulation of numerous cellular activities. This Klebsiella pneumoniae (strain 342) protein is Guanosine-5'-triphosphate,3'-diphosphate pyrophosphatase.